A 955-amino-acid polypeptide reads, in one-letter code: Mediator of RNA polymerase II transcription subunit 16 (955 aa).

The protein belongs to the Mediator complex subunit 16 family. As to quaternary structure, component of the Mediator complex.

It localises to the nucleus. In terms of biological role, component of the Mediator complex, a coactivator involved in the regulated transcription of nearly all RNA polymerase II-dependent genes. Mediator functions as a bridge to convey information from gene-specific regulatory proteins to the basal RNA polymerase II transcription machinery. Mediator is recruited to promoters by direct interactions with regulatory proteins and serves as a scaffold for the assembly of a functional preinitiation complex with RNA polymerase II and the general transcription factors. In Neosartorya fischeri (strain ATCC 1020 / DSM 3700 / CBS 544.65 / FGSC A1164 / JCM 1740 / NRRL 181 / WB 181) (Aspergillus fischerianus), this protein is Mediator of RNA polymerase II transcription subunit 16 (sin4).